The chain runs to 191 residues: Thiol:disulfide interchange protein TxlA (191 aa).

A helical membrane pass occupies residues Ile14–Gly30. The Thioredoxin domain maps to Val27–Glu148. Cys69 and Cys72 are joined by a disulfide. A compositionally biased stretch (polar residues) spans Ser165 to Val185. The disordered stretch occupies residues Ser165–Asp191.

It belongs to the thioredoxin family.

It is found in the cell membrane. Functionally, required for disulfide bond formation in some proteins. Acts by transferring its disulfide bond to other proteins and is reduced in the process. In Synechococcus elongatus (strain ATCC 33912 / PCC 7942 / FACHB-805) (Anacystis nidulans R2), this protein is Thiol:disulfide interchange protein TxlA (txlA).